A 573-amino-acid chain; its full sequence is Protein FAM200A (573 aa).

Residues 1–51 form a disordered region; sequence MTPESRDTTDLSPGGTQEMEGIVIVKVEEEDEEDHFQKERNKVESSPQVLS. Over 1–513 the chain is Extracellular; sequence MTPESRDTTD…DDFPLLSRKS (513 aa). The chain crosses the membrane as a helical span at residues 514-533; it reads ILLLLPFTTTYLCELGFSIL. The Cytoplasmic portion of the chain corresponds to 534–573; it reads TRLKTKKRNRLNSAPDMRVALSSCVPDWKELMNRQAHPSH.

It belongs to the FAM200 family.

The protein localises to the membrane. In Homo sapiens (Human), this protein is Protein FAM200A (FAM200A).